The sequence spans 439 residues: tRNA-2-methylthio-N(6)-dimethylallyladenosine synthase (439 aa).

The MTTase N-terminal domain maps to lysine 2 to lysine 119. Residues cysteine 11, cysteine 48, cysteine 82, cysteine 156, cysteine 160, and cysteine 163 each coordinate [4Fe-4S] cluster. The 233-residue stretch at lysine 142–serine 374 folds into the Radical SAM core domain. The 63-residue stretch at arginine 377–isoleucine 439 folds into the TRAM domain.

Belongs to the methylthiotransferase family. MiaB subfamily. Monomer. [4Fe-4S] cluster serves as cofactor.

Its subcellular location is the cytoplasm. It catalyses the reaction N(6)-dimethylallyladenosine(37) in tRNA + (sulfur carrier)-SH + AH2 + 2 S-adenosyl-L-methionine = 2-methylsulfanyl-N(6)-dimethylallyladenosine(37) in tRNA + (sulfur carrier)-H + 5'-deoxyadenosine + L-methionine + A + S-adenosyl-L-homocysteine + 2 H(+). In terms of biological role, catalyzes the methylthiolation of N6-(dimethylallyl)adenosine (i(6)A), leading to the formation of 2-methylthio-N6-(dimethylallyl)adenosine (ms(2)i(6)A) at position 37 in tRNAs that read codons beginning with uridine. The protein is tRNA-2-methylthio-N(6)-dimethylallyladenosine synthase of Buchnera aphidicola subsp. Schizaphis graminum (strain Sg).